The chain runs to 1199 residues: Tubulin monoglutamylase TTLL4 (1199 aa).

The span at 1–25 (MASAGTQHYSIGLRQKNSFKQSGPS) shows a compositional bias: polar residues. Disordered stretches follow at residues 1–43 (MASA…RVWP), 472–517 (IQLG…ELVD), and 525–544 (RDEN…SAVS). Basic and acidic residues predominate over residues 477–495 (SEKERPEEARELDSSDRDI). The segment covering 506–517 (AETEDTEEELVD) has biased composition (acidic residues). The 344-residue stretch at 604–947 (RKLLRWKMST…VLPNAEDIIS (344 aa)) folds into the TTL domain. At serine 691 the chain carries Phosphoserine. Residues lysine 721, 727–728 (RG), 749–752 (QRYL), and 762–764 (KFD) each bind ATP. Arginine 727 serves as a coordination point for a protein. Arginine 788 contacts L-glutamate. 809-810 (TN) contributes to the ATP binding site. The L-glutamate site is built by tyrosine 811, serine 812, and lysine 833. Residues aspartate 893, glutamate 906, and asparagine 908 each coordinate Mg(2+). The tract at residues 918-1029 (PLDISIKGQM…RGQFERIFPS (112 aa)) is c-MTBD region. Lysine 924 contacts L-glutamate. The span at 1130 to 1141 (GTTPKSKKTQAG) shows a compositional bias: polar residues. A disordered region spans residues 1130 to 1199 (GTTPKSKKTQ…ISDSLLAVSP (70 aa)). Basic and acidic residues predominate over residues 1151–1160 (SSKDSEDTSK). The segment covering 1164-1192 (LSTQTLPVIKCSGQTSRLSASSTFQSISD) has biased composition (polar residues).

Belongs to the tubulin--tyrosine ligase family. Requires Mg(2+) as cofactor.

It localises to the cytoplasm. The protein localises to the cell projection. The protein resides in the cilium. It is found in the cytoskeleton. Its subcellular location is the cilium basal body. It catalyses the reaction L-glutamyl-[protein] + L-glutamate + ATP = gamma-L-glutamyl-L-glutamyl-[protein] + ADP + phosphate + H(+). Functionally, monoglutamylase which modifies both tubulin and non-tubulin proteins, adding a single glutamate on the gamma-carboxyl group of specific glutamate residues of target proteins. Involved in the side-chain initiation step of the polyglutamylation reaction but not in the elongation step. Preferentially modifies beta-tail tubulin over the alpha-tubulin. Monoglutamylates nucleosome assembly proteins NAP1L1 and NAP1L4. Monoglutamylates nucleotidyltransferase CGAS, leading to inhibition of CGAS catalytic activity, thereby preventing antiviral defense function. Involved in KLF4 glutamylation which impedes its ubiquitination, thereby leading to somatic cell reprogramming, pluripotency maintenance and embryogenesis. The polypeptide is Tubulin monoglutamylase TTLL4 (Homo sapiens (Human)).